A 648-amino-acid polypeptide reads, in one-letter code: NAD(P)H-quinone oxidoreductase subunit 5, chloroplastic (648 aa).

16 helical membrane passes run 7 to 27 (AIWL…IGLL), 39 to 59 (LHGA…LGVL), 89 to 109 (VDPL…LVMI), 124 to 144 (FFVY…SPNL), 147 to 167 (VYGF…FWFT), 189 to 209 (LLLG…ASIA), 215 to 235 (LLIA…LVFM), 258 to 278 (TPIS…FLVA), 289 to 309 (LVME…ATMA), 327 to 347 (LGYM…FHLT), 354 to 374 (ALLF…VGFS), 395 to 415 (AMTF…ACFW), 432 to 452 (WLIA…IYFL), 472 to 492 (LGMV…GSLG), 518 to 538 (LAEF…GISL), and 625 to 645 (FYIL…TTHL).

Belongs to the complex I subunit 5 family. NDH is composed of at least 16 different subunits, 5 of which are encoded in the nucleus.

The protein resides in the plastid. It localises to the chloroplast thylakoid membrane. It carries out the reaction a plastoquinone + NADH + (n+1) H(+)(in) = a plastoquinol + NAD(+) + n H(+)(out). The catalysed reaction is a plastoquinone + NADPH + (n+1) H(+)(in) = a plastoquinol + NADP(+) + n H(+)(out). NDH shuttles electrons from NAD(P)H:plastoquinone, via FMN and iron-sulfur (Fe-S) centers, to quinones in the photosynthetic chain and possibly in a chloroplast respiratory chain. The immediate electron acceptor for the enzyme in this species is believed to be plastoquinone. Couples the redox reaction to proton translocation, and thus conserves the redox energy in a proton gradient. This is NAD(P)H-quinone oxidoreductase subunit 5, chloroplastic (ndhF) from Nephroselmis olivacea (Green alga).